A 320-amino-acid chain; its full sequence is GPI-specific phospholipase A2-like PGAP3 (320 aa).

Positions 1 to 23 (MAKRTAPLLLLTLAVGLAGGSQG) are cleaved as a signal peptide. At 24 to 98 (DREPVYRDCV…QFHGKWPFSR (75 aa)) the chain is on the lumenal side. N40 carries N-linked (GlcNAc...) asparagine glycosylation. A helical membrane pass occupies residues 99–119 (FLFIQEPASAVASLLNGLASL). At 120–135 (VMLCRYRASVPASSPM) the chain is on the cytoplasmic side. Residues 136 to 156 (YHTCMAFAWVSLNAWFWSTVF) traverse the membrane as a helical segment. Over 157–169 (HTRDTDLTEKMDY) the chain is Lumenal. The helical transmembrane segment at 170–190 (FCASAVILHSVYLCCVRTVGL) threads the bilayer. Residues 191–198 (QHPSVASA) are Cytoplasmic-facing. The chain crosses the membrane as a helical span at residues 199-219 (FGALLLLLLTGHISYLSLVHF). Residues 220-223 (DYGY) lie on the Lumenal side of the membrane. The helical transmembrane segment at 224-244 (NMMANVAIGLVNLAWWLVWCL) threads the bilayer. Residues 245 to 257 (RNRQRLPHTRRCM) lie on the Cytoplasmic side of the membrane. The helical transmembrane segment at 258–278 (VVVVLLQGLSLLELLDFPPLF) threads the bilayer. W279 is a topological domain (lumenal). Residues 280–299 (VLDAHAIWHISTIPVHTLFF) traverse the membrane as a helical segment. At 300–320 (RFLEDDSLYLLKESGAMFKLD) the chain is on the cytoplasmic side.

Belongs to the PGAP3 family.

The protein resides in the golgi apparatus membrane. Its function is as follows. Involved in the fatty acid remodeling steps of GPI-anchor maturation where the unsaturated acyl chain at sn-2 of inositol phosphate is replaced by a saturated stearoyl chain. May catalyze the first step of the fatty acid remodeling, by removing the unsaturated acyl chain at sn-2 of inositol phosphate, generating a lyso-GPI intermediate. The fatty acid remodeling steps is critical for the integration of GPI-APs into lipid rafts. In Mus musculus (Mouse), this protein is GPI-specific phospholipase A2-like PGAP3.